The primary structure comprises 77 residues: Small ribosomal subunit protein bS21 (77 aa).

Belongs to the bacterial ribosomal protein bS21 family.

This Methylococcus capsulatus (strain ATCC 33009 / NCIMB 11132 / Bath) protein is Small ribosomal subunit protein bS21.